Here is a 167-residue protein sequence, read N- to C-terminus: Ribosome maturation factor RimM (167 aa).

Residues 93–165 (KGVYYDFQLI…QVIIDPIPGL (73 aa)) enclose the PRC barrel domain.

This sequence belongs to the RimM family. Binds ribosomal protein uS19.

It is found in the cytoplasm. Functionally, an accessory protein needed during the final step in the assembly of 30S ribosomal subunit, possibly for assembly of the head region. Essential for efficient processing of 16S rRNA. May be needed both before and after RbfA during the maturation of 16S rRNA. It has affinity for free ribosomal 30S subunits but not for 70S ribosomes. The polypeptide is Ribosome maturation factor RimM (Dehalococcoides mccartyi (strain ATCC BAA-2266 / KCTC 15142 / 195) (Dehalococcoides ethenogenes (strain 195))).